The primary structure comprises 229 residues: Enolase-phosphatase E1 (229 aa).

A disordered region spans residues 207 to 229 (RDPASHHPQVQRFDDIHPEQIPA). Over residues 218–229 (RFDDIHPEQIPA) the composition is skewed to basic and acidic residues.

This sequence belongs to the HAD-like hydrolase superfamily. MasA/MtnC family. As to quaternary structure, monomer. It depends on Mg(2+) as a cofactor.

It catalyses the reaction 5-methylsulfanyl-2,3-dioxopentyl phosphate + H2O = 1,2-dihydroxy-5-(methylsulfanyl)pent-1-en-3-one + phosphate. Its pathway is amino-acid biosynthesis; L-methionine biosynthesis via salvage pathway; L-methionine from S-methyl-5-thio-alpha-D-ribose 1-phosphate: step 3/6. It functions in the pathway amino-acid biosynthesis; L-methionine biosynthesis via salvage pathway; L-methionine from S-methyl-5-thio-alpha-D-ribose 1-phosphate: step 4/6. Functionally, bifunctional enzyme that catalyzes the enolization of 2,3-diketo-5-methylthiopentyl-1-phosphate (DK-MTP-1-P) into the intermediate 2-hydroxy-3-keto-5-methylthiopentenyl-1-phosphate (HK-MTPenyl-1-P), which is then dephosphorylated to form the acireductone 1,2-dihydroxy-3-keto-5-methylthiopentene (DHK-MTPene). The chain is Enolase-phosphatase E1 from Klebsiella pneumoniae subsp. pneumoniae (strain ATCC 700721 / MGH 78578).